The primary structure comprises 378 residues: Queuine tRNA-ribosyltransferase (378 aa).

Catalysis depends on D89, which acts as the Proton acceptor. Residues 89–93 (DSGGF), D143, Q187, and G214 contribute to the substrate site. Positions 245–251 (GVGKPED) are RNA binding. The Nucleophile role is filled by D264. The tract at residues 269–273 (TRNAR) is RNA binding; important for wobble base 34 recognition. Zn(2+) is bound by residues C302, C304, C307, and H333.

This sequence belongs to the queuine tRNA-ribosyltransferase family. As to quaternary structure, homodimer. Within each dimer, one monomer is responsible for RNA recognition and catalysis, while the other monomer binds to the replacement base PreQ1. Zn(2+) is required as a cofactor.

It catalyses the reaction 7-aminomethyl-7-carbaguanine + guanosine(34) in tRNA = 7-aminomethyl-7-carbaguanosine(34) in tRNA + guanine. Its pathway is tRNA modification; tRNA-queuosine biosynthesis. Functionally, catalyzes the base-exchange of a guanine (G) residue with the queuine precursor 7-aminomethyl-7-deazaguanine (PreQ1) at position 34 (anticodon wobble position) in tRNAs with GU(N) anticodons (tRNA-Asp, -Asn, -His and -Tyr). Catalysis occurs through a double-displacement mechanism. The nucleophile active site attacks the C1' of nucleotide 34 to detach the guanine base from the RNA, forming a covalent enzyme-RNA intermediate. The proton acceptor active site deprotonates the incoming PreQ1, allowing a nucleophilic attack on the C1' of the ribose to form the product. After dissociation, two additional enzymatic reactions on the tRNA convert PreQ1 to queuine (Q), resulting in the hypermodified nucleoside queuosine (7-(((4,5-cis-dihydroxy-2-cyclopenten-1-yl)amino)methyl)-7-deazaguanosine). The chain is Queuine tRNA-ribosyltransferase from Yersinia enterocolitica serotype O:8 / biotype 1B (strain NCTC 13174 / 8081).